The chain runs to 504 residues: Glutamate--tRNA ligase (504 aa).

The 'HIGH' region signature appears at 12 to 22; the sequence is PSPTGALHIGG. The 'KMSKS' region motif lies at 260-264; that stretch reads KLSKR. ATP is bound at residue K263.

It belongs to the class-I aminoacyl-tRNA synthetase family. Glutamate--tRNA ligase type 1 subfamily. As to quaternary structure, monomer.

Its subcellular location is the cytoplasm. The enzyme catalyses tRNA(Glu) + L-glutamate + ATP = L-glutamyl-tRNA(Glu) + AMP + diphosphate. Catalyzes the attachment of glutamate to tRNA(Glu) in a two-step reaction: glutamate is first activated by ATP to form Glu-AMP and then transferred to the acceptor end of tRNA(Glu). This is Glutamate--tRNA ligase from Bacteroides thetaiotaomicron (strain ATCC 29148 / DSM 2079 / JCM 5827 / CCUG 10774 / NCTC 10582 / VPI-5482 / E50).